The sequence spans 842 residues: Protein translocase subunit SecA (842 aa).

Residues Gln85, 103 to 107, and Asp493 contribute to the ATP site; that span reads GEGKT. The Zn(2+) site is built by Cys825, Cys827, Cys836, and His837.

Belongs to the SecA family. Monomer and homodimer. Part of the essential Sec protein translocation apparatus which comprises SecA, SecYEG and auxiliary proteins SecDF. Other proteins may also be involved. Requires Zn(2+) as cofactor.

The protein resides in the cell membrane. Its subcellular location is the cytoplasm. It carries out the reaction ATP + H2O + cellular proteinSide 1 = ADP + phosphate + cellular proteinSide 2.. Part of the Sec protein translocase complex. Interacts with the SecYEG preprotein conducting channel. Has a central role in coupling the hydrolysis of ATP to the transfer of proteins into and across the cell membrane, serving as an ATP-driven molecular motor driving the stepwise translocation of polypeptide chains across the membrane. The polypeptide is Protein translocase subunit SecA (Streptococcus equi subsp. zooepidemicus (strain MGCS10565)).